The following is a 680-amino-acid chain: MSNLSLFDDVSAEIAQLREQIRYHNYRYYALDEPQIPDAEYDRLMQRLRELEAQYPASVTPDSPTQRVGAAPLSAFQTVEHQIPMLSLDNAFEEADVIAFNQRILDRLKSTENIEYACELKLDGLAVSLLYRDGVLVRGATRGDGSKGEDITQNLRTIASVPLKLLGEGYPAVLEVRGEVYMPKAGFNALNEKARSTGEKLFVNPRNAAAGALRQLDSRITASRPLEMCAYSVGLVEGGELPGTHTGILAALKSWGFLTNKETATASTIADCIAFYQSIQARRDSLAYDIDGIVFKVNARELQESLGFISRAPRWAIAYKFPAQEEMTVLQDVEFQVGRTGAVTPVARLQPVFVGGVTVSNATLHNRDEIQRLGIMIGDTVIVRRAGDVIPQIVQVVESRRPTDARPVLFPDHCPVCGSPVETLEDEAIARCSGGLVCAAQRKEAIKHFASRKALDVEGLGDKLVEQLVDTGLVSKLADIYQLTGEQLAAMERMGEKSADNLLQALEASKHTTLAKFIYALGIREIGEATARNLANHFGSLEKLAEADEETLVQVNDVGPVGAHFVAEFFAQESNRQAVADLRAAGIHWQDLDVSTIEDLPLKGLTYVLTGTLEVMSRDDAKAHLLALGAKVAGSVSAKTDYVVAGPGAGSKLQKARELNLNVMDEEALLDLLRKHGRLE.

NAD(+)-binding positions include 38-42, 87-88, and Glu119; these read DAEYD and SL. The active-site N6-AMP-lysine intermediate is the Lys121. Residues Arg142, Glu179, Lys296, and Lys320 each coordinate NAD(+). Zn(2+) contacts are provided by Cys414, Cys417, Cys432, and Cys438. The region spanning 597 to 680 is the BRCT domain; the sequence is IEDLPLKGLT…DLLRKHGRLE (84 aa).

Belongs to the NAD-dependent DNA ligase family. LigA subfamily. Mg(2+) is required as a cofactor. It depends on Mn(2+) as a cofactor.

It carries out the reaction NAD(+) + (deoxyribonucleotide)n-3'-hydroxyl + 5'-phospho-(deoxyribonucleotide)m = (deoxyribonucleotide)n+m + AMP + beta-nicotinamide D-nucleotide.. Functionally, DNA ligase that catalyzes the formation of phosphodiester linkages between 5'-phosphoryl and 3'-hydroxyl groups in double-stranded DNA using NAD as a coenzyme and as the energy source for the reaction. It is essential for DNA replication and repair of damaged DNA. The chain is DNA ligase from Cellvibrio japonicus (strain Ueda107) (Pseudomonas fluorescens subsp. cellulosa).